The following is a 218-amino-acid chain: Glutathione S-transferase Mu 1 (218 aa).

In terms of domain architecture, GST N-terminal spans 2–88 (PMTLGYWDVR…YLARKHGLCG (87 aa)). Glutathione contacts are provided by residues 7–8 (YW), 46–50 (WLSEK), 59–60 (NL), and 72–73 (QS). The region spanning 90 to 208 (TEEERIRVDI…KSSRFIRVPV (119 aa)) is the GST C-terminal domain. Residue tyrosine 116 participates in substrate binding.

It belongs to the GST superfamily. Mu family. In terms of assembly, homodimer. Well expressed in rabbit liver, brain and kidney.

It is found in the cytoplasm. The enzyme catalyses RX + glutathione = an S-substituted glutathione + a halide anion + H(+). Conjugation of reduced glutathione to a wide number of exogenous and endogenous hydrophobic electrophiles. The polypeptide is Glutathione S-transferase Mu 1 (Oryctolagus cuniculus (Rabbit)).